Here is a 151-residue protein sequence, read N- to C-terminus: MLVYGLYKSPLGYITVAKDDKGFIMLDFCDCVEGNSRDDSSFTEFFHKLDLYFEGKPINLREPINLKTYPFRLSVFKEVMKIPWGKVMTYKQIADSLGTSPRAVGMALSKNPILLIIPCHRVIAENGIGGYSRGVKLKRALLELEGVKIPE.

The active-site Nucleophile; methyl group acceptor is the cysteine 119.

This sequence belongs to the MGMT family.

It localises to the cytoplasm. It catalyses the reaction a 6-O-methyl-2'-deoxyguanosine in DNA + L-cysteinyl-[protein] = S-methyl-L-cysteinyl-[protein] + a 2'-deoxyguanosine in DNA. The catalysed reaction is a 4-O-methyl-thymidine in DNA + L-cysteinyl-[protein] = a thymidine in DNA + S-methyl-L-cysteinyl-[protein]. In terms of biological role, involved in the cellular defense against the biological effects of O6-methylguanine (O6-MeG) and O4-methylthymine (O4-MeT) in DNA. Repairs the methylated nucleobase in DNA by stoichiometrically transferring the methyl group to a cysteine residue in the enzyme. This is a suicide reaction: the enzyme is irreversibly inactivated. In Saccharolobus islandicus (strain L.S.2.15 / Lassen #1) (Sulfolobus islandicus), this protein is Methylated-DNA--protein-cysteine methyltransferase.